The following is a 297-amino-acid chain: Syntaxin-4 (297 aa).

The segment covering methionine 1–aspartate 12 has biased composition (basic and acidic residues). The segment at methionine 1 to glutamate 21 is disordered. Residues methionine 1 to leucine 275 are Cytoplasmic-facing. Residues serine 14 and serine 15 each carry the phosphoserine modification. The residue at position 31 (threonine 31) is a Phosphothreonine. 4 positions are modified to phosphoserine: serine 36, serine 117, serine 208, and serine 248. Residues histidine 43 to threonine 163 are a coiled coil. The interval glutamate 154–glycine 297 is interaction with CENPF. Positions leucine 200–alanine 262 constitute a t-SNARE coiled-coil homology domain. Residues isoleucine 276–valine 296 form a helical; Anchor for type IV membrane protein membrane-spanning segment. A topological domain (extracellular) is located at residue glycine 297.

It belongs to the syntaxin family. In terms of assembly, component of the SNARE complex composed of STX4, SNAP23 and VAMP7 that interacts with SYT7 during lysosomal exocytosis. Found in a complex with VAMP8 and SNAP23. Detected in a complex with SNAP23 and STXBP4. Interacts with VAMP2. Interacts with SNAP23 and SNAPIN. Interacts with LLGL1. Interacts (via C-terminus) with CENPF. Interacts with DOC2B. Interacts with STXBP6. Interacts with STXBP3; excludes interaction with DOC2B and SNAP25. Interacts with STXBP4; excludes interaction with VAMP2. Interacts with STXBP5L. In terms of tissue distribution, expressed in neutrophils and neutrophil-differentiated HL-60 cells. Expression in neutrophils increases with differentiation.

The protein localises to the cell membrane. It is found in the cell projection. Its subcellular location is the neuron projection. The protein resides in the stereocilium. Functionally, plasma membrane t-SNARE that mediates docking of transport vesicles. Necessary for the translocation of SLC2A4 from intracellular vesicles to the plasma membrane. In neurons, recruited at neurite tips to membrane domains rich in the phospholipid 1-oleoyl-2-palmitoyl-PC (OPPC) which promotes neurite tip surface expression of the dopamine transporter SLC6A3/DAT by facilitating fusion of SLC6A3-containing transport vesicles with the plasma membrane. Together with STXB3 and VAMP2, may also play a role in docking/fusion of intracellular GLUT4-containing vesicles with the cell surface in adipocytes and in docking of synaptic vesicles at presynaptic active zones. Required for normal hearing. The sequence is that of Syntaxin-4 (STX4) from Homo sapiens (Human).